The sequence spans 143 residues: Ribosome-binding factor A (143 aa).

The interval 1 to 20 (MRFMGKNKFHTGPGPSQRQL) is disordered.

Belongs to the RbfA family. Monomer. Binds 30S ribosomal subunits, but not 50S ribosomal subunits or 70S ribosomes.

It localises to the cytoplasm. Functionally, one of several proteins that assist in the late maturation steps of the functional core of the 30S ribosomal subunit. Associates with free 30S ribosomal subunits (but not with 30S subunits that are part of 70S ribosomes or polysomes). Required for efficient processing of 16S rRNA. May interact with the 5'-terminal helix region of 16S rRNA. In Roseobacter denitrificans (strain ATCC 33942 / OCh 114) (Erythrobacter sp. (strain OCh 114)), this protein is Ribosome-binding factor A.